The chain runs to 301 residues: Probable deoxyhypusine synthase 1 (301 aa).

K269 functions as the Nucleophile in the catalytic mechanism.

This sequence belongs to the deoxyhypusine synthase family. The cofactor is NAD(+).

It carries out the reaction [eIF5A protein]-L-lysine + spermidine = [eIF5A protein]-deoxyhypusine + propane-1,3-diamine. The protein operates within protein modification; eIF5A hypusination. Catalyzes the NAD-dependent oxidative cleavage of spermidine and the subsequent transfer of the butylamine moiety of spermidine to the epsilon-amino group of a specific lysine residue of the eIF-5A precursor protein to form the intermediate deoxyhypusine residue. The protein is Probable deoxyhypusine synthase 1 (dys1) of Archaeoglobus fulgidus (strain ATCC 49558 / DSM 4304 / JCM 9628 / NBRC 100126 / VC-16).